The primary structure comprises 1049 residues: MSLQFIGLQRRDVVALVNFLRHLTQKPDVDLEAHPKILKKCGEKRLHRRTVLFNELMLWLGYYRELRFHNPDLSSVLEEFEVRCAAVARRGYTYPFGDRGKARDHLAVLDRTEFDTDVRHDAEIVERALVSAVILAKMSVRETLVTAIGQTEPIAFVHLKDTEVQRIEENLEGVRRNMFCAKPLDLNLDRHANTALVNAVNKLVYTGRLIMNVRRSWEELERKCLARIQERCKLLVKELRMCLSFDSNYCRNILKHAVENGDSADTLLELLIEDFDIYVDSFPQSAHTFLGARSPSLEFDDDANLLSLGGGSAFSSVPKKHVPTQPLDGWSWIASPWKGHKPFRFEAHGSLAPAAEAHAARSAAVGYYDEEEKRRERQKRVDDEVVQREKQQLKAWEERQQNLQQRQQQPPPPTRKPGASRRLFGSSADEDDDDDDDDEKNIFTPIKKPGTSGKGAASGGGVSSIFSGLLSSGSQKPTSGPLNIPQQQQRHAAFSLVSPQVTKASPGRVRRDSAWDVRPLTETRGDLFSGDEDSDSSDGYPPNRQDPRFTDTLVDITDTETSAKPPVTTAYKFEQPTLTFGAGVNVPAGAGAAILTPTPVNPSTAPAPAPTPTFAGTQTPVNGNSPWAPTAPLPGDMNPANWPRERAWALKNPHLAYNPFRMPTTSTASQNTVSTTPRRPSTPRAAVTQTASRDAADEVWALRDQTAESPVEDSEEEDDDSSDTGSVVSLGHTTPSSDYNNDVISPPSQTPEQSTPSRIRKAKLSSPMTTTSTSQKPVLGKRVATPHASARAQTVTSTPVQGRLEKQVSGTPSTVPATLLQPQPASSKTTSSRNVTSGAGTSSASSARQPSASASVLSPTEDDVVSPATSPLSMLSSASPSPAKSAPPSPVKGRGSRVGVPSLKPTLGGKAVVGRPPSVPVSGSAPGRLSGSSRAASTTPTYPAVTTVYPPSSTAKSSVSNAPPVASPSILKPGASAALQSRRSTGIAAVGSPVKSTTGMKTVAFDLSSPQKSGTGPQPGSAGMGGAKTPSDAVQNILQKIEKIKNTEE.

2 disordered regions span residues 397–549 (EERQ…DPRF) and 659–945 (PFRM…YPAV). Residues 428–439 (ADEDDDDDDDDE) are compositionally biased toward acidic residues. The segment covering 452 to 462 (SGKGAASGGGV) has biased composition (gly residues). Residues 463–474 (SSIFSGLLSSGS) are compositionally biased toward low complexity. The segment covering 475 to 490 (QKPTSGPLNIPQQQQR) has biased composition (polar residues). A compositionally biased stretch (basic and acidic residues) spans 509 to 525 (VRRDSAWDVRPLTETRG). The segment covering 672–688 (TVSTTPRRPSTPRAAVT) has biased composition (low complexity). Acidic residues predominate over residues 710 to 722 (PVEDSEEEDDDSS). The segment covering 731–743 (GHTTPSSDYNNDV) has biased composition (polar residues). A compositionally biased stretch (low complexity) spans 745–757 (SPPSQTPEQSTPS). 3 stretches are compositionally biased toward polar residues: residues 766–776 (SPMTTTSTSQK), 791–800 (RAQTVTSTPV), and 808–835 (VSGT…SRNV). Composition is skewed to low complexity over residues 836–855 (TSGA…ASAS), 866–884 (SPAT…SPAK), 912–928 (VVGR…APGR), and 936–945 (ASTTPTYPAV). Ser922 is a glycosylation site (O-linked (GlcNAc) serine; by host). O-linked (GlcNAc) serine; by host glycosylation occurs at Ser953. Residues 1006–1032 (DLSSPQKSGTGPQPGSAGMGGAKTPSD) are disordered. Residues 1008-1018 (SSPQKSGTGPQ) show a composition bias toward polar residues.

It belongs to the herpesviridae large structural phosphoprotein family. In terms of assembly, interacts with host BICD1 and RAB6A. Interacts with small capsid protein UL48A; this interaction links together the capsid and pp150. Interacts with host CCNA2. In terms of processing, phosphorylated by host CCNA2.

It is found in the virion tegument. The protein resides in the host cytoplasm. Its subcellular location is the host nucleus. In terms of biological role, participates in the last steps of viral maturation and release. Associates with nuclear capsids prior to DNA encapsidation and later preserves the integrity of nucleocapsids through secondary envelopment at the assembly compartment. Interacts with host CCNA2 and thereby blocks the onset of lytic gene expression to promote establishment of a quiescent state of infection in undifferentiated cells. In Homo sapiens (Human), this protein is Tegument protein pp150 (UL32).